A 102-amino-acid polypeptide reads, in one-letter code: MICOS complex subunit MIC12 (102 aa).

The helical transmembrane segment at 4–26 threads the bilayer; sequence VLKLTSVTLAASSLAAAGYFYAF.

Belongs to the MICOS complex subunit Mic12 family. In terms of assembly, component of the mitochondrial contact site and cristae organizing system (MICOS) complex.

It localises to the mitochondrion inner membrane. Functionally, component of the MICOS complex, a large protein complex of the mitochondrial inner membrane that plays crucial roles in the maintenance of crista junctions, inner membrane architecture, and formation of contact sites to the outer membrane. This is MICOS complex subunit MIC12 (AIM5) from Lachancea thermotolerans (strain ATCC 56472 / CBS 6340 / NRRL Y-8284) (Yeast).